Here is a 335-residue protein sequence, read N- to C-terminus: Probable BOI-related E3 ubiquitin-protein ligase 3 (335 aa).

The tract at residues 196 to 232 (LEEKVKSLCVENQIWRDVAQSNEATVNALRSNLQQVL) is WRD domain. Residues 287 to 322 (CRSCGKGEASVLLLPCRHMCLCSVCGSSLNTCPICK) form an RING-type zinc finger.

As to quaternary structure, interacts with the DELLA proteins GAI, RGA, RGL1, RGL2 and RGL3.

The catalysed reaction is S-ubiquitinyl-[E2 ubiquitin-conjugating enzyme]-L-cysteine + [acceptor protein]-L-lysine = [E2 ubiquitin-conjugating enzyme]-L-cysteine + N(6)-ubiquitinyl-[acceptor protein]-L-lysine.. It participates in protein degradation; proteasomal ubiquitin-dependent pathway. Its function is as follows. Probable E3 ubiquitin-protein ligase. Has no effect on the stability of the DELLA proteins. The chain is Probable BOI-related E3 ubiquitin-protein ligase 3 (BRG3) from Arabidopsis thaliana (Mouse-ear cress).